The primary structure comprises 179 residues: ATP synthase subunit delta (179 aa).

This sequence belongs to the ATPase delta chain family. As to quaternary structure, F-type ATPases have 2 components, F(1) - the catalytic core - and F(0) - the membrane proton channel. F(1) has five subunits: alpha(3), beta(3), gamma(1), delta(1), epsilon(1). F(0) has three main subunits: a(1), b(2) and c(10-14). The alpha and beta chains form an alternating ring which encloses part of the gamma chain. F(1) is attached to F(0) by a central stalk formed by the gamma and epsilon chains, while a peripheral stalk is formed by the delta and b chains.

The protein localises to the cell inner membrane. F(1)F(0) ATP synthase produces ATP from ADP in the presence of a proton or sodium gradient. F-type ATPases consist of two structural domains, F(1) containing the extramembraneous catalytic core and F(0) containing the membrane proton channel, linked together by a central stalk and a peripheral stalk. During catalysis, ATP synthesis in the catalytic domain of F(1) is coupled via a rotary mechanism of the central stalk subunits to proton translocation. Its function is as follows. This protein is part of the stalk that links CF(0) to CF(1). It either transmits conformational changes from CF(0) to CF(1) or is implicated in proton conduction. This is ATP synthase subunit delta from Bordetella avium (strain 197N).